Reading from the N-terminus, the 915-residue chain is Protein inturned (915 aa).

Residues 88 to 144 are disordered; it reads NAKRQANSSNKSEAKLKKLTKILRRKRRPSQRKAEGKDSSQRPASILKNQAGQRPGV. Basic residues predominate over residues 104 to 118; sequence KKLTKILRRKRRPSQ. The span at 128 to 139 shows a compositional bias: polar residues; the sequence is QRPASILKNQAG. The region spanning 165–253 is the PDZ domain; it reads SVSSSSADRG…PMQVRLTLET (89 aa). The disordered stretch occupies residues 688–738; that stretch reads GIRGRRASPQRSQSDSGSEGHADGTPASVARRDSLGSGGSDGSLGSAGFLK.

Belongs to the inturned family.

It localises to the cytoplasm. The protein localises to the cell surface. It is found in the cytoskeleton. The protein resides in the cilium basal body. Functionally, plays a key role in ciliogenesis and embryonic development. Regulator of cilia formation by controlling the organization of the apical actin cytoskeleton and the positioning of the basal bodies at the apical cell surface, which in turn is essential for the normal orientation of elongating ciliary microtubules. Plays a key role in definition of cell polarity via its role in ciliogenesis but not via conversion extension. Has an indirect effect on hedgehog signaling. The polypeptide is Protein inturned (intu) (Danio rerio (Zebrafish)).